Consider the following 100-residue polypeptide: uncharacterized protein (100 aa).

Transmembrane regions (helical) follow at residues 9-29 (VYTY…SWVV), 41-61 (PYLI…ITAP), and 72-92 (SIPF…FLGI).

It is found in the membrane. This is an uncharacterized protein from Saccharomyces cerevisiae (strain ATCC 204508 / S288c) (Baker's yeast).